The sequence spans 291 residues: Phytanoyl-CoA dioxygenase domain-containing protein 1 (291 aa).

A Phosphothreonine modification is found at Thr-55. 2-oxoglutarate is bound by residues Lys-102, Met-141, 156-158 (HQD), and Trp-174. Residues His-156 and Asp-158 each coordinate Fe cation. Position 246 (His-246) interacts with Fe cation. 2-oxoglutarate is bound by residues Ser-248 and Arg-257.

It belongs to the PhyH family. PHYHD1 subfamily. Requires Fe cation as cofactor.

2-oxoglutarate(2OG)-dependent dioxygenase that catalyzes the conversion of 2-oxoglutarate to succinate and CO(2) in an iron-dependent manner. However, does not couple 2OG turnover to the hydroxylation of acyl-coenzyme A derivatives, implying that it is not directly involved in phytanoyl coenzyme-A metabolism. Does not show detectable activity towards fatty acid CoA thioesters. This chain is Phytanoyl-CoA dioxygenase domain-containing protein 1 (Phyhd1), found in Rattus norvegicus (Rat).